We begin with the raw amino-acid sequence, 1004 residues long: MKMADAKQKRNEQLKRWIGSETDLEPPVVKRKKTKVKFDDGAVFLAACSSGDTEEVLRLLERGADINYANVDGLTALHQACIDDNVDMVKFLVENGANINQPDNEGWIPLHAAASCGYLDIAEYLISQGAHVGAVNSEGDTPLDIAEEEAMEELLQNEVNRQGVDIEAARKEEERIMLRDARQWLNSGHINDVRHAKSGGTALHVAAAKGYTEVLKLLIQARYDVNIKDYDGWTPLHAAAHWGKEEACRILVENLCDMEAVNKVGQTAFDVADEDILGYLEELQKKQNLLHSEKREKKSPLIESTANLDNNQTQKTFKNKETLIMEQEKNASSIESLEHEKADEEEEGKKDESSCSSEEEEDDDSESEAETDKAKTLANANTTSTQSASMTAPSVAGGQGTPTSPLKKFPTSTTKVSPKEEERKDESPASWRLGLRKTGSYGALAEITASKEAQKEKDSAGVIRSASSPRLSSSLDNKEKEKDGKGTRLAYVAPTIPRRLASTSDIDEKENRDSSASSIRSGSSYARRKWEEDVKKNSLNEGPTSLNTSYQRSGSFGRRQDDLVSSNVPSTASTVTSSAGLQKTLPASANTTTKSTTGSTSAGVQSSTSNRLWAEDSTEKEKDSVPTAVTVPVAPSVVNAAATTTAMTTATSGTVSSTSEVRERRRSYLTPVRDEESESQRKARSRQARQSRRSTQGVTLTDLQEAEKTIGRSRSTRTREQENEEKEKEEKEKQDKEKQEEKKESETKDDDYRQRYSRTVEEPYHRYRPTSTSTSTSSTSSLSTSTSSLSSSSQLNRPNSLIGITSAYSRSGTKESEREGGKKEEEKEEDKSQPKSIRERRRPREKRRSTGVSFWTQDSDENEQEHQSDSEEGTNKKETQSDSLSRYDTGSLSVSSGDRYDSAQGRSGSQSYLEDRKPYCSRLEKEDSTDFKKLYEQILAENEKLKAQLHDTNMELTDLKLQLEKTTQRQERFADRSLLEMEKRVSGKSQYLLGGKKSSRKKDI.

The interval K35–F38 is important for interaction with PPP1CB. 6 ANK repeats span residues D39 to Y68, D72 to Q101, E105 to A134, E138 to V164, S198 to I227, and D231 to A260. Residues H291–P300 are compositionally biased toward basic and acidic residues. The disordered stretch occupies residues H291–C920. Positions I302–T316 are enriched in polar residues. 2 stretches are compositionally biased toward basic and acidic residues: residues K318–K329 and S336–S353. Positions S357–A369 are enriched in acidic residues. Polar residues predominate over residues A378 to A392. Residues S417 to S427 are compositionally biased toward basic and acidic residues. Positions R464–L475 are enriched in low complexity. Positions D476–G486 are enriched in basic and acidic residues. The span at S514–Y525 shows a compositional bias: low complexity. Residues R528–S538 are compositionally biased toward basic and acidic residues. The span at L539–G554 shows a compositional bias: polar residues. 2 stretches are compositionally biased toward low complexity: residues V564–S578 and A587–A602. Residues W613–S624 show a composition bias toward basic and acidic residues. Over residues V625 to S659 the composition is skewed to low complexity. The span at V672–R681 shows a compositional bias: basic and acidic residues. Positions K682 to R692 are enriched in basic residues. At T695 the chain carries Phosphothreonine; by ROCK2. Residues R717 to H765 show a composition bias toward basic and acidic residues. The segment covering T770–S793 has biased composition (low complexity). Residues Q794–Y808 show a composition bias toward polar residues. A compositionally biased stretch (basic and acidic residues) spans G812–I837. Positions R838 to S849 are enriched in basic residues. T850 carries the phosphothreonine; by ROCK2 modification. The segment covering Q864–Q880 has biased composition (basic and acidic residues). Residues S881–S896 show a composition bias toward polar residues.

PP1 comprises a catalytic subunit, PPP1CA, PPP1CB or PPP1CC, and one or several targeting or regulatory subunits. PPP1R12A mediates binding to myosin. Post-translationally, phosphorylated by CIT (Rho-associated kinase) and by ROCK2 on serine and threonine residues. Phosphorylation at Thr-695 leads to inhibition of myosin phosphatase activity. Phosphorylation at Thr-850 abolishes myosin binding. May be phosphorylated at Thr-695 by DMPK; may inhibit the myosin phosphatase activity. In terms of tissue distribution, detected in brain, lung, aorta, heart, gizzard, stomach, oviduct, spleen, kidney and small intestine.

Its subcellular location is the cytoplasm. It is found in the cytoskeleton. The protein resides in the stress fiber. Regulates myosin phosphatase activity. The protein is Protein phosphatase 1 regulatory subunit 12A (PPP1R12A) of Gallus gallus (Chicken).